The chain runs to 729 residues: Fatty acid oxidation complex subunit alpha (729 aa).

The interval 1–189 (MLYQGESLYL…KVGLVQAVVA (189 aa)) is enoyl-CoA hydratase/isomerase. Aspartate 296 contributes to the substrate binding site. The tract at residues 311–729 (PVPQQAAVLG…HADVSHGQPA (419 aa)) is 3-hydroxyacyl-CoA dehydrogenase. NAD(+) contacts are provided by residues methionine 324, aspartate 343, 400–402 (VVE), lysine 407, and serine 429. The For 3-hydroxyacyl-CoA dehydrogenase activity role is filled by histidine 450. Asparagine 453 provides a ligand contact to NAD(+). Residues asparagine 500 and tyrosine 660 each contribute to the substrate site.

This sequence in the N-terminal section; belongs to the enoyl-CoA hydratase/isomerase family. The protein in the C-terminal section; belongs to the 3-hydroxyacyl-CoA dehydrogenase family. As to quaternary structure, heterotetramer of two alpha chains (FadB) and two beta chains (FadA).

The catalysed reaction is a (3S)-3-hydroxyacyl-CoA + NAD(+) = a 3-oxoacyl-CoA + NADH + H(+). The enzyme catalyses a (3S)-3-hydroxyacyl-CoA = a (2E)-enoyl-CoA + H2O. It catalyses the reaction a 4-saturated-(3S)-3-hydroxyacyl-CoA = a (3E)-enoyl-CoA + H2O. It carries out the reaction (3S)-3-hydroxybutanoyl-CoA = (3R)-3-hydroxybutanoyl-CoA. The catalysed reaction is a (3Z)-enoyl-CoA = a 4-saturated (2E)-enoyl-CoA. The enzyme catalyses a (3E)-enoyl-CoA = a 4-saturated (2E)-enoyl-CoA. It participates in lipid metabolism; fatty acid beta-oxidation. Its function is as follows. Involved in the aerobic and anaerobic degradation of long-chain fatty acids via beta-oxidation cycle. Catalyzes the formation of 3-oxoacyl-CoA from enoyl-CoA via L-3-hydroxyacyl-CoA. It can also use D-3-hydroxyacyl-CoA and cis-3-enoyl-CoA as substrate. This is Fatty acid oxidation complex subunit alpha from Pectobacterium atrosepticum (strain SCRI 1043 / ATCC BAA-672) (Erwinia carotovora subsp. atroseptica).